Consider the following 120-residue polypeptide: Large ribosomal subunit protein uL18 (120 aa).

The protein belongs to the universal ribosomal protein uL18 family. Part of the 50S ribosomal subunit; part of the 5S rRNA/L5/L18/L25 subcomplex. Contacts the 5S and 23S rRNAs.

Functionally, this is one of the proteins that bind and probably mediate the attachment of the 5S RNA into the large ribosomal subunit, where it forms part of the central protuberance. This Chloroherpeton thalassium (strain ATCC 35110 / GB-78) protein is Large ribosomal subunit protein uL18.